The primary structure comprises 188 residues: Acireductone dioxygenase (188 aa).

Residues His97, His99, Glu103, and His141 each contribute to the Fe(2+) site. 4 residues coordinate Ni(2+): His97, His99, Glu103, and His141.

It belongs to the acireductone dioxygenase (ARD) family. As to quaternary structure, monomer. Fe(2+) serves as cofactor. Requires Ni(2+) as cofactor.

It catalyses the reaction 1,2-dihydroxy-5-(methylsulfanyl)pent-1-en-3-one + O2 = 3-(methylsulfanyl)propanoate + CO + formate + 2 H(+). It carries out the reaction 1,2-dihydroxy-5-(methylsulfanyl)pent-1-en-3-one + O2 = 4-methylsulfanyl-2-oxobutanoate + formate + 2 H(+). Its pathway is amino-acid biosynthesis; L-methionine biosynthesis via salvage pathway; L-methionine from S-methyl-5-thio-alpha-D-ribose 1-phosphate: step 5/6. Functionally, catalyzes 2 different reactions between oxygen and the acireductone 1,2-dihydroxy-3-keto-5-methylthiopentene (DHK-MTPene) depending upon the metal bound in the active site. Fe-containing acireductone dioxygenase (Fe-ARD) produces formate and 2-keto-4-methylthiobutyrate (KMTB), the alpha-ketoacid precursor of methionine in the methionine recycle pathway. Ni-containing acireductone dioxygenase (Ni-ARD) produces methylthiopropionate, carbon monoxide and formate, and does not lie on the methionine recycle pathway. The sequence is that of Acireductone dioxygenase from Xylella fastidiosa (strain M12).